A 713-amino-acid polypeptide reads, in one-letter code: Polyribonucleotide nucleotidyltransferase (713 aa).

Mg(2+) is bound by residues D494 and D500. The 63-residue stretch at 561–623 (PSFSTMTIPK…EAVQSAEKRV (63 aa)) folds into the KH domain. Residues 633–702 (GDVYQGTVKS…KSGKYKLSRK (70 aa)) form the S1 motif domain.

The protein belongs to the polyribonucleotide nucleotidyltransferase family. Mg(2+) is required as a cofactor.

It is found in the cytoplasm. The catalysed reaction is RNA(n+1) + phosphate = RNA(n) + a ribonucleoside 5'-diphosphate. In terms of biological role, involved in mRNA degradation. Catalyzes the phosphorolysis of single-stranded polyribonucleotides processively in the 3'- to 5'-direction. In Amoebophilus asiaticus (strain 5a2), this protein is Polyribonucleotide nucleotidyltransferase.